A 129-amino-acid chain; its full sequence is Protein RfbJ (129 aa).

Belongs to the glycosyltransferase 2 family.

The protein operates within bacterial outer membrane biogenesis; lipopolysaccharide biosynthesis. The protein is Protein RfbJ (rfbJ) of Shigella flexneri.